A 698-amino-acid polypeptide reads, in one-letter code: G1/S-specific cyclin CCN1 (698 aa).

Positions 1–11 (MTSLQQQQQQQ) are enriched in low complexity. Disordered regions lie at residues 1–21 (MTSL…PHHI), 277–326 (QKKQ…DDED), 469–577 (DEDE…GSIL), 599–619 (SNSS…EKRY), and 659–698 (NNTN…QYHQ). Residues 277–302 (QKKQKKAFSSNSSRTTTASYTHQNQS) show a composition bias toward polar residues. Composition is skewed to acidic residues over residues 310-326 (DEDI…DDED) and 469-480 (DEDENVSTDDEA). 2 stretches are compositionally biased toward polar residues: residues 493–520 (DGNN…NHPQ) and 528–567 (PSAT…SSFA). Residues 659-669 (NNTNSSSPLMN) are compositionally biased toward polar residues. Over residues 670–690 (QQQQYYHQQQHQQQVTQSSLY) the composition is skewed to low complexity.

It belongs to the cyclin family.

Functionally, essential for the control of the cell cycle at the G1/S (start) transition. Interacts with the CDC2 protein kinase to form MPF. The polypeptide is G1/S-specific cyclin CCN1 (CCN1) (Candida albicans (strain WO-1) (Yeast)).